Here is a 5255-residue protein sequence, read N- to C-terminus: Bacitracin synthase 1 (5255 aa).

Residues 39 to 612 form a domain 1 (isoleucine-activating) region; it reads LHELFEEQAM…IKELSAFIEA (574 aa). A compositionally biased stretch (basic and acidic residues) spans 519-531; sequence VDRKALPEPDRTA. Residues 519 to 542 are disordered; it reads VDRKALPEPDRTAGAENEYEAPRN. A Carrier 1 domain is found at 539-614; the sequence is APRNETEEKL…ELSAFIEANH (76 aa). Serine 574 is modified (O-(pantetheine 4'-phosphoryl)serine). The segment at 621–1037 is cyclization; the sequence is TLVTRAADPE…ITWDYVEQIF (417 aa). Positions 1109–1648 are domain 2 (cysteine-activating); that stretch reads HHDEVMTYQE…FKNDTIIALD (540 aa). 4 Carrier domains span residues 1580–1655, 2616–2691, 3659–3733, and 5166–5241; these read LPEN…KNRE, APRD…VRRR, PPRN…TEET, and APRN…LTAE. Residues serine 1615, serine 2651, serine 3694, and serine 5201 each carry the O-(pantetheine 4'-phosphoryl)serine modification. The interval 2124–2689 is domain 3 (leucine-activating); sequence GKAIHQLFEE…IKGLRDISVR (566 aa). The segment at 3164 to 3732 is domain 4 (glutamine-activating); the sequence is DHPAVAFGDE…KDLSRFITEE (569 aa). The tract at residues 4668–5249 is domain 5 (isoleucine-activating); it reads LHELFEEQAM…AEAESAVSEE (582 aa).

It belongs to the ATP-dependent AMP-binding enzyme family. As to quaternary structure, large multienzyme complex of BA1, BA2 and BA3. It depends on pantetheine 4'-phosphate as a cofactor.

The catalysed reaction is L-glutamate = D-glutamate. The protein operates within antibiotic biosynthesis; bacitracin biosynthesis. Functionally, activates five amino acids, incorporates two D-amino acids, releases and cyclizes the mature bacitracin. The sequence is that of Bacitracin synthase 1 (bacA) from Bacillus licheniformis.